Reading from the N-terminus, the 805-residue chain is MKYDFTSIEKKWQTRWQAEATFATGTDHSKPKYYVLDMFPYPSGSGLHVGHLEGYTASDIIARYKRSSGYNVLHPMGWDAFGLPAEQFAIKTGTHPRITTEANVKNFKGTLQAMGFSYDWEREINTTDSGYFKWTQWIFLQLYDRGLAYMSEVDVNWCEELKTVLANEEVDEKLADGYTVVRRPLRQWVLKITAYAERLLADLEELDWPENVKQMQRNWIGRSEGVEIDFELRCHRTTLKAYTTRPDTLFGATYLVIAPEHPMAEKLATAPQLLVVKEYITKAKLKSDLERTGLQKEKSGVFTGSYAINPATGQPLPIWISDFVLISYGTGAIMSVPAHDSRDWAFAKQYNLPIIEVIKSPHDVQEAVFEEKNSTCVNSANDEISLNGLDFATAFERMATWLESKKVGKRKVNYKLRDWIFSRQRYWGEPIPIKHYEDGTIRPETNLPLELPAVEAYHPTSTGESPLANITEWLIGNDEHGAFRRETNTMPQWAGSCWYYLRFIDPHNHAQVVDGNNERYWMNVDLYIGGAEHAVLHLLYSRFWHKVLYDLGVVSTKEPFQKLFNQGMILGEDNEKMSKSRGNVIPADHVLQRYGADAVRLYEMFLGPLEQVKPWNTNGIEGISRFLGKVWRFVYPEHSEAATQPSNEPLPDELLRRMHKTIKKVGDDTSSLKFNTAIAEMMVFVNELTKTGCNNREAIETLLKLLAPYAPHMTEELWEALGHTNSISHEPFPTFNPALVEENMAIIAVQVNGKLRGTFTVPAKSPKEMLLEEARKVESVAKFLEGKTIVKEIVVPDKLVNFAVK.

Positions 40 to 51 (PYPSGSGLHVGH) match the 'HIGH' region motif. The 'KMSKS' region signature appears at 576-580 (KMSKS). ATP is bound at residue Lys579.

The protein belongs to the class-I aminoacyl-tRNA synthetase family.

It is found in the cytoplasm. The catalysed reaction is tRNA(Leu) + L-leucine + ATP = L-leucyl-tRNA(Leu) + AMP + diphosphate. The sequence is that of Leucine--tRNA ligase from Chlorobium chlorochromatii (strain CaD3).